The chain runs to 1214 residues: Inner capsid protein VP3 (1214 aa).

The tract at residues 1 to 80 (MPRRSARKAQ…SVNNDGDIIT (80 aa)) is disordered. Over residues 8–18 (KAQSATASPAD) the composition is skewed to polar residues. The span at 28–51 (PTTNSPPSTTSPNQAAADANQQQA) shows a compositional bias: low complexity. The C2H2-type zinc-finger motif lies at 117 to 140 (YVCNVCNARFSTMSALSEHLRSDH).

Belongs to the turreted BTV-fold inner capsid family. In terms of assembly, homodecamer; each decamer is made up of two conformers of VP2, called VP2A and VP2B. 12 homodecamers assemble to form an icosahedral capsid. Interacts with VP6.

Its subcellular location is the virion. Its function is as follows. Inner capsid protein that self-assembles to form an icosahedral capsid with a T=2 symmetry, which consists of 120 copies of VP2, with channels at each of its five-fold vertices. This capsid constitutes the innermost concentric layer of the viral mature particle. The polypeptide is Inner capsid protein VP3 (S3) (Notemigonus crysoleucas (Golden shiner)).